Reading from the N-terminus, the 195-residue chain is ATP-dependent Clp protease proteolytic subunit (195 aa).

Ser-102 acts as the Nucleophile in catalysis. His-125 is an active-site residue.

Belongs to the peptidase S14 family. In terms of assembly, component of the chloroplastic Clp protease core complex.

The protein resides in the plastid. It localises to the chloroplast stroma. It carries out the reaction Hydrolysis of proteins to small peptides in the presence of ATP and magnesium. alpha-casein is the usual test substrate. In the absence of ATP, only oligopeptides shorter than five residues are hydrolyzed (such as succinyl-Leu-Tyr-|-NHMec, and Leu-Tyr-Leu-|-Tyr-Trp, in which cleavage of the -Tyr-|-Leu- and -Tyr-|-Trp bonds also occurs).. Its function is as follows. Cleaves peptides in various proteins in a process that requires ATP hydrolysis. Has a chymotrypsin-like activity. Plays a major role in the degradation of misfolded proteins. This chain is ATP-dependent Clp protease proteolytic subunit, found in Phaseolus vulgaris (Kidney bean).